We begin with the raw amino-acid sequence, 329 residues long: Acetyl-coenzyme A carboxylase carboxyl transferase subunit alpha (329 aa).

The region spanning 40–294 (QLETLAARRR…REAIERHLDE (255 aa)) is the CoA carboxyltransferase C-terminal domain.

Belongs to the AccA family. In terms of assembly, acetyl-CoA carboxylase is a heterohexamer composed of biotin carboxyl carrier protein (AccB), biotin carboxylase (AccC) and two subunits each of ACCase subunit alpha (AccA) and ACCase subunit beta (AccD).

The protein resides in the cytoplasm. The enzyme catalyses N(6)-carboxybiotinyl-L-lysyl-[protein] + acetyl-CoA = N(6)-biotinyl-L-lysyl-[protein] + malonyl-CoA. It participates in lipid metabolism; malonyl-CoA biosynthesis; malonyl-CoA from acetyl-CoA: step 1/1. Functionally, component of the acetyl coenzyme A carboxylase (ACC) complex. First, biotin carboxylase catalyzes the carboxylation of biotin on its carrier protein (BCCP) and then the CO(2) group is transferred by the carboxyltransferase to acetyl-CoA to form malonyl-CoA. The polypeptide is Acetyl-coenzyme A carboxylase carboxyl transferase subunit alpha (Prochlorococcus marinus (strain MIT 9313)).